The sequence spans 332 residues: PTS-dependent dihydroxyacetone kinase, dihydroxyacetone-binding subunit DhaK (332 aa).

Residues 9–331 (QPQDVVSEML…LNEDVKTISW (323 aa)) form the DhaK domain. Residues 55-58 (GSGH), Lys106, and Asp111 each bind dihydroxyacetone. The active-site Proton acceptor is the His58. Catalysis depends on His220, which acts as the Tele-hemiaminal-histidine intermediate.

As to quaternary structure, homodimer. The dihydroxyacetone kinase complex is composed of a homodimer of DhaM, a homodimer of DhaK and the subunit DhaL.

It catalyses the reaction dihydroxyacetone + phosphoenolpyruvate = dihydroxyacetone phosphate + pyruvate. It participates in polyol metabolism; glycerol degradation. In terms of biological role, dihydroxyacetone binding subunit of the dihydroxyacetone kinase, which is responsible the phosphoenolpyruvate (PEP)-dependent phosphorylation of dihydroxyacetone via a phosphoryl group transfer from DhaL-ATP. The sequence is that of PTS-dependent dihydroxyacetone kinase, dihydroxyacetone-binding subunit DhaK from Lactococcus lactis subsp. lactis (strain IL1403) (Streptococcus lactis).